The chain runs to 286 residues: uncharacterized protein (286 aa).

The Radical SAM core domain occupies 2 to 221 (VDGMKHLILK…PIYIKNLQKR (220 aa)). Cys-16, Cys-20, and Cys-23 together coordinate [4Fe-4S] cluster.

The protein belongs to the radical SAM superfamily. Anaerobic sulfatase-maturating enzyme family. Requires [4Fe-4S] cluster as cofactor.

This is an uncharacterized protein from Methanocaldococcus jannaschii (strain ATCC 43067 / DSM 2661 / JAL-1 / JCM 10045 / NBRC 100440) (Methanococcus jannaschii).